A 572-amino-acid chain; its full sequence is Methionine--tRNA ligase (572 aa).

The 'HIGH' region motif lies at 11–21; that stretch reads PYINGIKHLGN. Zn(2+) contacts are provided by Cys-143, Cys-146, Cys-156, and Cys-159. A 'KMSKS' region motif is present at residues 346–350; sequence QFSTS. ATP is bound at residue Thr-349.

The protein belongs to the class-I aminoacyl-tRNA synthetase family. MetG type 1 subfamily. As to quaternary structure, monomer. Zn(2+) is required as a cofactor.

It is found in the cytoplasm. The catalysed reaction is tRNA(Met) + L-methionine + ATP = L-methionyl-tRNA(Met) + AMP + diphosphate. Functionally, is required not only for elongation of protein synthesis but also for the initiation of all mRNA translation through initiator tRNA(fMet) aminoacylation. This is Methionine--tRNA ligase from Paracoccus denitrificans (strain Pd 1222).